A 275-amino-acid polypeptide reads, in one-letter code: Beta-lactamase OXA-15 (275 aa).

Residues 1 to 21 (MAIRIFAILFSIFSLATFAHA) form the signal peptide. Residue S72 is the Acyl-ester intermediate of the active site. K75 is modified (N6-carboxylysine). Residue 210–212 (KTG) coordinates substrate.

Belongs to the class-D beta-lactamase family.

It catalyses the reaction a beta-lactam + H2O = a substituted beta-amino acid. Its function is as follows. Hydrolyzes oxacillin, first-generation cephalosporins and ceftazidime. Does not hydrolyze cefotaxime or carbapenems. The protein is Beta-lactamase OXA-15 (bla) of Pseudomonas aeruginosa.